The chain runs to 860 residues: Alanine--tRNA ligase (860 aa).

The Zn(2+) site is built by His-553, His-557, Cys-655, and His-659.

The protein belongs to the class-II aminoacyl-tRNA synthetase family. It depends on Zn(2+) as a cofactor.

The protein resides in the cytoplasm. The catalysed reaction is tRNA(Ala) + L-alanine + ATP = L-alanyl-tRNA(Ala) + AMP + diphosphate. In terms of biological role, catalyzes the attachment of alanine to tRNA(Ala) in a two-step reaction: alanine is first activated by ATP to form Ala-AMP and then transferred to the acceptor end of tRNA(Ala). Also edits incorrectly charged Ser-tRNA(Ala) and Gly-tRNA(Ala) via its editing domain. The sequence is that of Alanine--tRNA ligase from Legionella pneumophila (strain Paris).